Reading from the N-terminus, the 630-residue chain is 1-deoxy-D-xylulose-5-phosphate synthase (630 aa).

Residues H72 and 113 to 115 (GHS) contribute to the thiamine diphosphate site. Residue D144 coordinates Mg(2+). Thiamine diphosphate-binding positions include 145–146 (GA), N173, Y284, and E367. Position 173 (N173) interacts with Mg(2+).

It belongs to the transketolase family. DXPS subfamily. Homodimer. The cofactor is Mg(2+). Requires thiamine diphosphate as cofactor.

The enzyme catalyses D-glyceraldehyde 3-phosphate + pyruvate + H(+) = 1-deoxy-D-xylulose 5-phosphate + CO2. It participates in metabolic intermediate biosynthesis; 1-deoxy-D-xylulose 5-phosphate biosynthesis; 1-deoxy-D-xylulose 5-phosphate from D-glyceraldehyde 3-phosphate and pyruvate: step 1/1. In terms of biological role, catalyzes the acyloin condensation reaction between C atoms 2 and 3 of pyruvate and glyceraldehyde 3-phosphate to yield 1-deoxy-D-xylulose-5-phosphate (DXP). This Bacillus cereus (strain G9842) protein is 1-deoxy-D-xylulose-5-phosphate synthase.